Here is a 180-residue protein sequence, read N- to C-terminus: ATP-dependent protease subunit HslV (180 aa).

The active site involves threonine 7. Na(+)-binding residues include alanine 165, cysteine 168, and threonine 171.

It belongs to the peptidase T1B family. HslV subfamily. As to quaternary structure, a double ring-shaped homohexamer of HslV is capped on each side by a ring-shaped HslU homohexamer. The assembly of the HslU/HslV complex is dependent on binding of ATP.

It is found in the cytoplasm. It carries out the reaction ATP-dependent cleavage of peptide bonds with broad specificity.. Allosterically activated by HslU binding. Functionally, protease subunit of a proteasome-like degradation complex believed to be a general protein degrading machinery. This is ATP-dependent protease subunit HslV from Geobacillus sp. (strain WCH70).